The primary structure comprises 452 residues: Tubulin alpha-8 chain (452 aa).

Positions 15, 74, 143, 147, 148, 182, 209, and 231 each coordinate GTP. E74 provides a ligand contact to Mg(2+). Residue E257 is part of the active site.

Belongs to the tubulin family. As to quaternary structure, dimer of alpha and beta chains. A typical microtubule is a hollow water-filled tube with an outer diameter of 25 nm and an inner diameter of 15 nM. Alpha-beta heterodimers associate head-to-tail to form protofilaments running lengthwise along the microtubule wall with the beta-tubulin subunit facing the microtubule plus end conferring a structural polarity. Microtubules usually have 13 protofilaments but different protofilament numbers can be found in some organisms and specialized cells. Mg(2+) is required as a cofactor.

It is found in the cytoplasm. The protein localises to the cytoskeleton. It catalyses the reaction GTP + H2O = GDP + phosphate + H(+). Tubulin is the major constituent of microtubules, a cylinder consisting of laterally associated linear protofilaments composed of alpha- and beta-tubulin heterodimers. Microtubules grow by the addition of GTP-tubulin dimers to the microtubule end, where a stabilizing cap forms. Below the cap, tubulin dimers are in GDP-bound state, owing to GTPase activity of alpha-tubulin. The polypeptide is Tubulin alpha-8 chain (tba-8) (Caenorhabditis elegans).